A 157-amino-acid polypeptide reads, in one-letter code: C-type lectin 9a (157 aa).

An N-terminal signal peptide occupies residues 1-23 (MGRFIFVSFGLLVVFLSLSGTGA). Disulfide bonds link C27–C38, C55–C151, and C126–C143. The C-type lectin domain maps to 34–152 (YDQYCYKPFN…CQAKKPFVCK (119 aa)).

Belongs to the snaclec family. In terms of assembly, heteromultimer; disulfide-linked. In terms of tissue distribution, expressed by the venom gland.

It is found in the secreted. In terms of biological role, interferes with one step of hemostasis (modulation of platelet aggregation, or coagulation cascade, for example). The chain is C-type lectin 9a from Crotalus adamanteus (Eastern diamondback rattlesnake).